Here is a 680-residue protein sequence, read N- to C-terminus: Dipeptidyl carboxypeptidase (680 aa).

Position 469 (His-469) interacts with Zn(2+). Glu-470 is a catalytic residue. Zn(2+) is bound by residues His-473 and His-476.

This sequence belongs to the peptidase M3 family. Zn(2+) serves as cofactor.

Its subcellular location is the cytoplasm. It catalyses the reaction Hydrolysis of unblocked, C-terminal dipeptides from oligopeptides, with broad specificity. Does not hydrolyze bonds in which P1' is Pro, or both P1 and P1' are Gly.. Its function is as follows. Removes dipeptides from the C-termini of N-blocked tripeptides, tetrapeptides and larger peptides. The sequence is that of Dipeptidyl carboxypeptidase (dcp) from Salmonella typhimurium (strain LT2 / SGSC1412 / ATCC 700720).